The chain runs to 204 residues: Superoxide dismutase [Mn] (204 aa).

Mn(2+) is bound by residues histidine 29, histidine 84, aspartate 167, and histidine 171.

This sequence belongs to the iron/manganese superoxide dismutase family. In terms of assembly, homotetramer. Requires Mn(2+) as cofactor.

The enzyme catalyses 2 superoxide + 2 H(+) = H2O2 + O2. Its function is as follows. Destroys superoxide anion radicals which are normally produced within the cells and which are toxic to biological systems. The polypeptide is Superoxide dismutase [Mn] (sodA) (Thermus thermophilus (strain ATCC BAA-163 / DSM 7039 / HB27)).